The sequence spans 83 residues: Putative membrane protein insertion efficiency factor (83 aa).

The disordered stretch occupies residues 62–83; it reads KGGYDPVPPKSVKSAGNSKDSK.

It belongs to the UPF0161 family.

It is found in the cell inner membrane. Its function is as follows. Could be involved in insertion of integral membrane proteins into the membrane. The sequence is that of Putative membrane protein insertion efficiency factor from Chlorobaculum tepidum (strain ATCC 49652 / DSM 12025 / NBRC 103806 / TLS) (Chlorobium tepidum).